Here is a 132-residue protein sequence, read N- to C-terminus: MDAGEHTKGGSSRGRLVAIGVLECGGRKVSGVVEVGTFKDPGGCPVVYHLMFRPTDLEELGGVMSPEFVKANDIEKIDEDKEYQDESKFVYPPGVTFETVKAADVFQVVWRNPSDTSEILRRLTIHRRPCVI.

Belongs to the UPF0329 family.

The polypeptide is UPF0329 protein ECU07_0050/ECU09_2020 (Encephalitozoon cuniculi (strain GB-M1) (Microsporidian parasite)).